Here is a 251-residue protein sequence, read N- to C-terminus: MWIGVISLFPEMFRAITDYGVTGRAVKNGLLNVQCWSPRDFTHDRHRTVDDRPYGGGPGMLMMVQPLQDAIHEAKNKAGEGTKVIYLSPQGRKLDQQGVSELAANPKMILVCGRYEGIDERLIATEIDEEWSMGDYVLSGGELAAMALIDSVSRFIPGVLGHEASSAEDSFARGLLDCPHYTRPEVLAGMEVPSVLLSGNHAEIRRWRLKQSLGRTWLRRPELLESLALTDEQATLLNEFQREYRVRQHDD.

S-adenosyl-L-methionine-binding positions include Gly113 and 133–138 (MGDYVL).

Belongs to the RNA methyltransferase TrmD family. Homodimer.

The protein resides in the cytoplasm. It carries out the reaction guanosine(37) in tRNA + S-adenosyl-L-methionine = N(1)-methylguanosine(37) in tRNA + S-adenosyl-L-homocysteine + H(+). Specifically methylates guanosine-37 in various tRNAs. This Sodalis glossinidius (strain morsitans) protein is tRNA (guanine-N(1)-)-methyltransferase.